The primary structure comprises 220 residues: Cytidylate kinase (220 aa).

9–17 (GPAASGKST) contributes to the ATP binding site.

Belongs to the cytidylate kinase family. Type 1 subfamily.

It localises to the cytoplasm. It catalyses the reaction CMP + ATP = CDP + ADP. The enzyme catalyses dCMP + ATP = dCDP + ADP. The protein is Cytidylate kinase of Thermotoga sp. (strain RQ2).